The sequence spans 179 residues: Apoptosis regulator Bcl-2 homolog (179 aa).

Positions 76-95 match the BH1 motif; sequence ELFKDLINWGRICGFIVFSA. A BH2 motif is present at residues 126 to 141; that stretch reads PWMISHGGQEEFLAFS.

This sequence belongs to the Bcl-2 family. As to quaternary structure, interacts with host BECN1 (via BH3 homology domain); this interaction allows the virus to inhibit BECN1, and thus autophagy. Interacts with host BID. Interacts with host BAX.

The protein resides in the host mitochondrion. The protein localises to the host endoplasmic reticulum. In terms of biological role, suppresses apoptosis in host cell to promote the viral replication. Has the ability to potentially bind to all the members of the proapoptotic Bcl-2 family. Inhibits autophagy by interacting with host Beclin 1 (BECN1). In Ornithodoros (relapsing fever ticks), this protein is Apoptosis regulator Bcl-2 homolog.